A 140-amino-acid polypeptide reads, in one-letter code: Large ribosomal subunit protein uL13 (140 aa).

Belongs to the universal ribosomal protein uL13 family. As to quaternary structure, part of the 50S ribosomal subunit.

In terms of biological role, this protein is one of the early assembly proteins of the 50S ribosomal subunit, although it is not seen to bind rRNA by itself. It is important during the early stages of 50S assembly. The protein is Large ribosomal subunit protein uL13 of Nautilia profundicola (strain ATCC BAA-1463 / DSM 18972 / AmH).